The primary structure comprises 188 residues: Achaete-scute homolog 5 (188 aa).

A basic motif region spans residues 80–93; sequence AFIQKRNERERQRV. The bHLH domain occupies 80 to 132; the sequence is AFIQKRNERERQRVKCVNEGYARLRGHLPGALTEKRLSKVETLRAAIRYIKYL. Positions 94–132 are helix-loop-helix motif; that stretch reads KCVNEGYARLRGHLPGALTEKRLSKVETLRAAIRYIKYL. The interval 139-188 is disordered; the sequence is TPDGAPPPATSPPPAHTGHSNVPQPSSLVAESSGSPFSSSPFLESEEPSL. Residues 142-153 show a composition bias toward pro residues; sequence GAPPPATSPPPA. Over residues 158-168 the composition is skewed to polar residues; it reads SNVPQPSSLVA. Positions 169-181 are enriched in low complexity; the sequence is ESSGSPFSSSPFL.

As to quaternary structure, interacts with transcription factor TCF3/E12. Expressed in teeth (at protein level).

It localises to the nucleus. Its function is as follows. Transcription factor. Probably binds E-box motifs 5'-CANNTG-3' in complex with transcription factor TCF3/E12. Negatively modulates transcription of target genes such as CDH1/E-cadherin, perhaps by recruiting the PRC2 repressive complex to regulatory elements. Regulates ameloblast development and tooth germ growth, perhaps acting by positively modulating migration of inner enamel epithelium (IEE) cells. Plays a role in enamel formation. The protein is Achaete-scute homolog 5 of Mus musculus (Mouse).